A 430-amino-acid polypeptide reads, in one-letter code: MGYLFTSESVSEGHPDKVADQISDAVLDKLLAFDPSSKVACETLVTTGQVVLAGEVKTKAYVDLQRIAREVINRIGYTKSEYMFEGNSCGVFSAIHEQSADINRGVEREDPMNQGAGDQGMMFGYATNETENYMPLSLDLAHKLLMVLAEIRREGKVMTYLRPDAKSQVTIEYDDNGKPVRIDTIVVSTQHDEFVTPADSSKEAQLKADEEMLAKIRQDVIEILMPRVIAGIHNEEVLALFNDRIVYHVNPTGKFVIGGPHGDTGLTGRKIIVDTYGGKGAHGGGAFSGKDPSKVDRSAAYAARHIAKNMVAAGVADEMLVQVSYAIGVARPINIYVNTYGRSNVKLSDGEIAKKIDELFDLRPKAIEERLKLRNPIYEETASYGHMGREPKVVTKTYESMYHEAKTLEVELFTWEKLDYVDKIKEAFGL.

Histidine 14 contributes to the ATP binding site. Position 16 (aspartate 16) interacts with Mg(2+). Residue glutamate 42 coordinates K(+). Residues glutamate 55 and glutamine 98 each coordinate L-methionine. Positions glutamine 98–arginine 108 are flexible loop. Residues aspartate 164 to lysine 166, lysine 254 to phenylalanine 255, aspartate 263, arginine 269 to lysine 270, alanine 286, and lysine 290 contribute to the ATP site. An L-methionine-binding site is contributed by aspartate 263. Lysine 294 lines the L-methionine pocket.

This sequence belongs to the AdoMet synthase family. Homotetramer; dimer of dimers. Mg(2+) serves as cofactor. The cofactor is K(+).

Its subcellular location is the cytoplasm. It carries out the reaction L-methionine + ATP + H2O = S-adenosyl-L-methionine + phosphate + diphosphate. It functions in the pathway amino-acid biosynthesis; S-adenosyl-L-methionine biosynthesis; S-adenosyl-L-methionine from L-methionine: step 1/1. Catalyzes the formation of S-adenosylmethionine (AdoMet) from methionine and ATP. The overall synthetic reaction is composed of two sequential steps, AdoMet formation and the subsequent tripolyphosphate hydrolysis which occurs prior to release of AdoMet from the enzyme. This chain is S-adenosylmethionine synthase, found in Phocaeicola vulgatus (strain ATCC 8482 / DSM 1447 / JCM 5826 / CCUG 4940 / NBRC 14291 / NCTC 11154) (Bacteroides vulgatus).